We begin with the raw amino-acid sequence, 225 residues long: Uracil-DNA glycosylase (225 aa).

Catalysis depends on D65, which acts as the Proton acceptor.

Belongs to the uracil-DNA glycosylase (UDG) superfamily. UNG family.

The protein localises to the cytoplasm. The catalysed reaction is Hydrolyzes single-stranded DNA or mismatched double-stranded DNA and polynucleotides, releasing free uracil.. Its function is as follows. Excises uracil residues from the DNA which can arise as a result of misincorporation of dUMP residues by DNA polymerase or due to deamination of cytosine. The polypeptide is Uracil-DNA glycosylase (Bacillus cereus (strain ZK / E33L)).